The following is a 177-amino-acid chain: Adenine phosphoribosyltransferase (177 aa).

Belongs to the purine/pyrimidine phosphoribosyltransferase family. In terms of assembly, homodimer.

The protein localises to the cytoplasm. The catalysed reaction is AMP + diphosphate = 5-phospho-alpha-D-ribose 1-diphosphate + adenine. It functions in the pathway purine metabolism; AMP biosynthesis via salvage pathway; AMP from adenine: step 1/1. Catalyzes a salvage reaction resulting in the formation of AMP, that is energically less costly than de novo synthesis. This is Adenine phosphoribosyltransferase from Chlorobium limicola (strain DSM 245 / NBRC 103803 / 6330).